Here is a 542-residue protein sequence, read N- to C-terminus: 2,3-bisphosphoglycerate-independent phosphoglycerate mutase (542 aa).

Residues D13 and S63 each coordinate Mn(2+). S63 (phosphoserine intermediate) is an active-site residue. Substrate is bound by residues H124, 154-155, R186, R192, 263-266, and K357; these read RD and RADR. Mn(2+)-binding residues include D424, H428, D465, H466, and H484.

This sequence belongs to the BPG-independent phosphoglycerate mutase family. In terms of assembly, monomer. Mn(2+) is required as a cofactor.

It carries out the reaction (2R)-2-phosphoglycerate = (2R)-3-phosphoglycerate. Its pathway is carbohydrate degradation; glycolysis; pyruvate from D-glyceraldehyde 3-phosphate: step 3/5. Its function is as follows. Catalyzes the interconversion of 2-phosphoglycerate and 3-phosphoglycerate. The polypeptide is 2,3-bisphosphoglycerate-independent phosphoglycerate mutase (Herpetosiphon aurantiacus (strain ATCC 23779 / DSM 785 / 114-95)).